The primary structure comprises 312 residues: HTH-type transcriptional regulator TdcA (312 aa).

The 58-residue stretch at 7–64 folds into the HTH lysR-type domain; it reads PKTQHLVVFQEVIRSGSIGSAAKELGLTQPAVSKIINDIEDYFGVELVVRKNTGVTLT. The H-T-H motif DNA-binding region spans 24–43; that stretch reads IGSAAKELGLTQPAVSKIIN.

It belongs to the LysR transcriptional regulatory family.

It participates in amino-acid degradation; L-threonine degradation via propanoate pathway [regulation]. Functionally, transcriptional activator for the tdcABCDE operon. In Escherichia coli O157:H7, this protein is HTH-type transcriptional regulator TdcA (tdcA).